The sequence spans 1203 residues: MAGHDVQYGKHRTRRSFSRIKEVLDLPNLIEIQTDSFKAFLDHGLKEVFEDVLPISNFTDTMELEFVGYEIKEPKYTLEEARIHDASYSAPIFVTFRLINKETGEIKTQEVFFGDFPIMTEMGTFIINGGERIIVSQLVRSPGVYFNDKVDKNGKVGYGSTVIPNRGAWLELESDSKDITYTRIDRTRKIPFTTLVRALGFSGDDEIFDIFGDSELVRNTVEKDIHKNPMDSRTDEALKEIYERLRPGEPKTAESSRSLLVARFFDPRRYDLAAVGRYKINKKLNVKTRLLNQTIAEPLVDPETGEILVEAGTIMTRSVIESIESHLDGDLNKIVYIPNDAAVVTEPVVLQKFKVVAPTDPDRVVTIIGNANPDDKVRTVTPADILAEMSYFLNLAEGLGRVDDIDHLGNRRIRAVGELLANQVRLGLSRMERNVRERMSVQDNEVLTPQQIINIRPVTAAVKEFFGSSQLSQFMDQHNPLSELSHKRRLSALGPGGLTRDRAGYEVRDVHYTHYGRMCPIETPEGPNIGLINNLSSYGHLNKYGFVQTPYRKVDRETGVVTNEIVWLTADEEDEYTVAQANSRLNEDGTFAEKIVMGRHQGVNQEYPANIVDYMDVSPKQVVAVATACIPFLENDDSNRALMGANMQRQAVPLINPQAPYVGTGMEYQAAHDSGAAVIAQYDGKVTYADADKVEVRREDGSLDVYHIQKFRRSNSGTAYNQRTLVKVGDVVEKGDFIADGPSMENGEMALGQNPIVAYMTWEGYNFEDAVIMSERLVKDDVYTSVHLEEYESETRDTKLGPEEITREIPNVGEDALKDLDEMGIIRIGAEVKEGDILVGKVTPKGEKDLSAEERLLHAIFGDKSREVRDTSLRVPHGADGVVRDVKIFTRVNGDELQSGVNMLVRVYIAQKRKIKVGDKMAGRHGNKGVVSRIVPVEDMPYLPDGTPVDIMLNPLGVPSRMNIGQVMELHLGMAARTLGIHIATPVFDGASSEDLWSTVKEAGMDSDAKTILYDGRTGEPFDNRVSVGVMYMIKLHHMVDDKLHARSVGPYSTVTQQPLGGKAQFGGQRFGEMEVWALEAYGASNVLQEILTYKSDDINGRLKAYEAITKGKPIPKPGVPESFRVLVKELQSLGLDMRVLDEDDQEVELRDLDEGMDEDVIHVDDLEKAREKAAQEAKAAFEAEEAEKATKAEATEEAAEQE.

The segment covering 1174-1195 (AAQEAKAAFEAEEAEKATKAEA) has biased composition (basic and acidic residues). Residues 1174 to 1203 (AAQEAKAAFEAEEAEKATKAEATEEAAEQE) form a disordered region.

Belongs to the RNA polymerase beta chain family. In terms of assembly, the RNAP catalytic core consists of 2 alpha, 1 beta, 1 beta' and 1 omega subunit. When a sigma factor is associated with the core the holoenzyme is formed, which can initiate transcription.

The enzyme catalyses RNA(n) + a ribonucleoside 5'-triphosphate = RNA(n+1) + diphosphate. DNA-dependent RNA polymerase catalyzes the transcription of DNA into RNA using the four ribonucleoside triphosphates as substrates. This chain is DNA-directed RNA polymerase subunit beta, found in Streptococcus pneumoniae (strain P1031).